A 284-amino-acid polypeptide reads, in one-letter code: RNA polymerase sigma factor RpoH (284 aa).

The tract at residues 54–123 (MVLAHLRFVV…IHEFILRNWR (70 aa)) is sigma-70 factor domain-2. The Interaction with polymerase core subunit RpoC signature appears at 78–81 (DLIQ). The segment at 229–280 (ALEGLDERSRDILQQRWLSEEKATLHDLAEKYNVSAERIRQLEKNAMSKLKG) is sigma-70 factor domain-4. Residues 253–272 (LHDLAEKYNVSAERIRQLEK) constitute a DNA-binding region (H-T-H motif).

It belongs to the sigma-70 factor family. RpoH subfamily. In terms of assembly, interacts with the RNA polymerase core enzyme.

Its subcellular location is the cytoplasm. In terms of biological role, sigma factors are initiation factors that promote the attachment of RNA polymerase to specific initiation sites and are then released. This sigma factor is involved in regulation of expression of heat shock genes. The polypeptide is RNA polymerase sigma factor RpoH (Pseudomonas aeruginosa (strain ATCC 15692 / DSM 22644 / CIP 104116 / JCM 14847 / LMG 12228 / 1C / PRS 101 / PAO1)).